The following is a 209-amino-acid chain: Uracil phosphoribosyltransferase (209 aa).

Residues Arg-79, Arg-104, and 131–139 contribute to the 5-phospho-alpha-D-ribose 1-diphosphate site; that span reads DPMLATGGS. Residues Ile-194 and 199-201 contribute to the uracil site; that span reads GDA. Residue Asp-200 coordinates 5-phospho-alpha-D-ribose 1-diphosphate.

This sequence belongs to the UPRTase family. It depends on Mg(2+) as a cofactor.

The catalysed reaction is UMP + diphosphate = 5-phospho-alpha-D-ribose 1-diphosphate + uracil. It participates in pyrimidine metabolism; UMP biosynthesis via salvage pathway; UMP from uracil: step 1/1. Allosterically activated by GTP. Catalyzes the conversion of uracil and 5-phospho-alpha-D-ribose 1-diphosphate (PRPP) to UMP and diphosphate. This chain is Uracil phosphoribosyltransferase, found in Shouchella clausii (strain KSM-K16) (Alkalihalobacillus clausii).